The primary structure comprises 161 residues: ATP synthase subunit b (161 aa).

A helical membrane pass occupies residues 12–32 (IAFFLFVFFCMKYIWPNLISL).

This sequence belongs to the ATPase B chain family. In terms of assembly, F-type ATPases have 2 components, F(1) - the catalytic core - and F(0) - the membrane proton channel. F(1) has five subunits: alpha(3), beta(3), gamma(1), delta(1), epsilon(1). F(0) has three main subunits: a(1), b(2) and c(10-14). The alpha and beta chains form an alternating ring which encloses part of the gamma chain. F(1) is attached to F(0) by a central stalk formed by the gamma and epsilon chains, while a peripheral stalk is formed by the delta and b chains.

It is found in the cell membrane. Its function is as follows. F(1)F(0) ATP synthase produces ATP from ADP in the presence of a proton or sodium gradient. F-type ATPases consist of two structural domains, F(1) containing the extramembraneous catalytic core and F(0) containing the membrane proton channel, linked together by a central stalk and a peripheral stalk. During catalysis, ATP synthesis in the catalytic domain of F(1) is coupled via a rotary mechanism of the central stalk subunits to proton translocation. In terms of biological role, component of the F(0) channel, it forms part of the peripheral stalk, linking F(1) to F(0). In Wigglesworthia glossinidia brevipalpis, this protein is ATP synthase subunit b.